Here is a 177-residue protein sequence, read N- to C-terminus: Bifunctional protein PyrR (177 aa).

Substrate contacts are provided by residues 42–43, 104–112, and Arg-137; these read SR and DDVLYTGRT. The PRPP-binding motif lies at 100–112; sequence VVIVDDVLYTGRT.

Belongs to the purine/pyrimidine phosphoribosyltransferase family. PyrR subfamily.

The enzyme catalyses UMP + diphosphate = 5-phospho-alpha-D-ribose 1-diphosphate + uracil. Functionally, regulates the transcription of the pyrimidine nucleotide (pyr) operon in response to exogenous pyrimidines. Its function is as follows. Also displays a weak uracil phosphoribosyltransferase activity which is not physiologically significant. The sequence is that of Bifunctional protein PyrR from Fusobacterium nucleatum subsp. nucleatum (strain ATCC 25586 / DSM 15643 / BCRC 10681 / CIP 101130 / JCM 8532 / KCTC 2640 / LMG 13131 / VPI 4355).